Reading from the N-terminus, the 353-residue chain is Melanin-concentrating hormone receptor 1 (353 aa).

Residues 1–26 (MDLQTSLLSTGPNASNISDGQDNLTL) are disordered. Topologically, residues 1 to 45 (MDLQTSLLSTGPNASNISDGQDNLTLPGSPPRTGSVSYINIIMPS) are extracellular. Asn-13, Asn-16, and Asn-23 each carry an N-linked (GlcNAc...) asparagine glycan. A helical transmembrane segment spans residues 46-66 (VFGTICLLGIVGNSTVIFAVV). Residues 67-79 (KKSKLHWCSNVPD) lie on the Cytoplasmic side of the membrane. A helical membrane pass occupies residues 80–100 (IFIINLSVVDLLFLLGMPFMI). Over 101-116 (HQLMGNGVWHFGETMC) the chain is Extracellular. Cys-116 and Cys-194 are joined by a disulfide. A helical membrane pass occupies residues 117 to 139 (TLITAMDANSQFTSTYILTAMTI). Topologically, residues 140–161 (DRYLATVHPISSTKFRKPSMAT) are cytoplasmic. The helical transmembrane segment at 162–182 (LVICLLWALSFISITPVWLYA) threads the bilayer. The Extracellular segment spans residues 183 to 204 (RLIPFPGGAVGCGIRLPNPDTD). Residues 205-225 (LYWFTLYQFFLAFALPFVVIT) form a helical membrane-spanning segment. The Cytoplasmic segment spans residues 226-256 (AAYVKILQRMTSSVAPASQRSIRLRTKRVTR). A helical transmembrane segment spans residues 257–277 (TAIAICLVFFVCWAPYYVLQL). Residues 278-294 (TQLSISRPTLTFVYLYN) lie on the Extracellular side of the membrane. Residues 295-315 (AAISLGYANSCLNPFVYIVLC) form a helical membrane-spanning segment. The Cytoplasmic segment spans residues 316-353 (ETFRKRLVLSVKPAAQGQLRTVSNAQTADEERTESKGT).

It belongs to the G-protein coupled receptor 1 family. In terms of assembly, interacts with NCDN. As to expression, high level in the brain, moderate amounts in the eye and skeletal muscle, and small amounts in tongue and pituitary.

Its subcellular location is the cell membrane. In terms of biological role, receptor for melanin-concentrating hormone, coupled to G proteins that inhibit adenylyl cyclase. The polypeptide is Melanin-concentrating hormone receptor 1 (Rattus norvegicus (Rat)).